We begin with the raw amino-acid sequence, 786 residues long: Protein RDM16 (786 aa).

Composition is skewed to basic and acidic residues over residues 1 to 80 (MDKE…SRDR), 87 to 112 (RSHEGSKEKESRSKRKDREEENGARD), and 123 to 143 (NGERRSRFEDVAIEVENKDAQ). Disordered stretches follow at residues 1–223 (MDKE…SANL), 255–283 (KKATKPTSEGSPHTRVPPSTTTPAVSTGT), 532–557 (RPIEPPAEAAPPPPQPLKLTKKEQKK), and 616–642 (EREQAHTDRNAARKLTPAEKREKKERK). Polar residues predominate over residues 145–164 (SEGSGATNPTSGVTMGASTY). The segment covering 165–176 (SSIPSEASAAPS) has biased composition (low complexity). The segment covering 177-189 (QTLLTKVSSISTT) has biased composition (polar residues). A compositionally biased stretch (basic and acidic residues) spans 190–203 (DENKASVVRSHEVP). Residues 268 to 283 (TRVPPSTTTPAVSTGT) are compositionally biased toward low complexity. Residues 534-547 (IEPPAEAAPPPPQP) show a composition bias toward pro residues.

It is found in the nucleus. Its subcellular location is the nucleoplasm. Functions in the RNA-directed DNA methylation (RdDM) pathway. Acts as a pre-mRNA splicing factor, likely by affecting Pol V transcripts. Affects DNA methylation of transposable elements (TEs) and preferentially influences NRPD1- and ROS1-targeted loci. This chain is Protein RDM16, found in Arabidopsis thaliana (Mouse-ear cress).